Here is a 209-residue protein sequence, read N- to C-terminus: Response regulator protein VraR (209 aa).

A Response regulatory domain is found at 4–120 (KVLFVDDHEM…DIADAVRKTS (117 aa)). Asp-55 is modified (4-aspartylphosphate). In terms of domain architecture, HTH luxR-type spans 141–206 (RAELYEMLTE…QAVIYAFQHN (66 aa)). The segment at residues 165–184 (NQEIASASHITIKTVKTHVS) is a DNA-binding region (H-T-H motif).

In terms of assembly, homodimer. Post-translationally, phosphorylated by VraS. Phosphorylation state of VraR controls dimerization of the protein.

The protein resides in the cytoplasm. In terms of biological role, member of the two-component regulatory system VraS/VraR involved in the control of the cell wall peptidoglycan biosynthesis. Upon cellular stress, the histidine kinase VraS transfers the phosphoryl group onto VraR. Upon phosphorylation, VraR dimerizes at the N-terminal domain. In turn, phosphorylation-induced dimerization expands and enhances the VraR binding to its own promoter leading to increased expression and subsequent modulation of as many as 40 genes, which ultimately constitute the S.aureus response to cell wall damage. In addition, inhibits the host autophagic flux and delays the early stage of autophagosome formation, thereby promoting bacterial survival. Facilitates the ability of S.aureus to resist host polymorphonuclear leukocytes-mediated phagocytosis and killing thus contributing to immune evasion. The polypeptide is Response regulator protein VraR (vraR) (Staphylococcus aureus (strain Mu3 / ATCC 700698)).